Reading from the N-terminus, the 151-residue chain is Methylglyoxal synthase (151 aa).

The region spanning 6-151 (RVMPAHKHIA…DYDAYLAERV (146 aa)) is the MGS-like domain. Substrate is bound by residues His-19, Lys-23, 45–48 (TGTT), and 65–66 (SG). Asp-71 functions as the Proton donor/acceptor in the catalytic mechanism. His-98 lines the substrate pocket.

The protein belongs to the methylglyoxal synthase family.

It carries out the reaction dihydroxyacetone phosphate = methylglyoxal + phosphate. Its function is as follows. Catalyzes the formation of methylglyoxal from dihydroxyacetone phosphate. In Aliivibrio fischeri (strain MJ11) (Vibrio fischeri), this protein is Methylglyoxal synthase.